The sequence spans 343 residues: Ion-translocating oxidoreductase complex subunit D (343 aa).

Helical transmembrane passes span 24–44, 45–65, 69–91, and 124–144; these read VLLATVPGILALTWLFGAGTL, YNLALASLFALAFEAAILAAR, LAFFLKDYSALVTAVLLALALPP, and AMLGYVVVLISFPVEMTSWPA. At Thr171 the chain carries FMN phosphoryl threonine. A run of 5 helical transmembrane segments spans residues 197–217, 221–241, 251–271, 284–304, and 305–325; these read FGGAGSEAVNLAFLAGGLYLL, LITWHAPVGMLAALFVMSLLF, GSPLFHLLTGATMLGAFFIVT, LVFGIGVGVLVYVIRAWGGYP, and DAVAFAVLLMNLAAPTIDYYT.

The protein belongs to the NqrB/RnfD family. The complex is composed of six subunits: RnfA, RnfB, RnfC, RnfD, RnfE and RnfG. FMN is required as a cofactor.

Its subcellular location is the cell inner membrane. Part of a membrane-bound complex that couples electron transfer with translocation of ions across the membrane. This Ectopseudomonas mendocina (strain ymp) (Pseudomonas mendocina) protein is Ion-translocating oxidoreductase complex subunit D.